The primary structure comprises 70 residues: Conotoxin TxMMSK-02 (70 aa).

Residues 1-20 (MMSKLGALLTICLLLFSLTA) form the signal peptide. Residues 21-53 (VPLDGDQHADQPAQRLQDRIPTEDHPLFDPNKR) constitute a propeptide that is removed on maturation. Cystine bridges form between Cys54-Cys68, Cys55-Cys64, and Cys60-Cys67. At Pro66 the chain carries 4-hydroxyproline. Tyr69 is subject to Tyrosine amide.

The protein belongs to the conotoxin M superfamily. In terms of tissue distribution, expressed by the venom duct.

It is found in the secreted. The polypeptide is Conotoxin TxMMSK-02 (Conus textile (Cloth-of-gold cone)).